Consider the following 123-residue polypeptide: Histone H2B.1/H2B.2 (123 aa).

The disordered stretch occupies residues 1-30; the sequence is MPPKVSGKAAKKAGKAQKNITKGDKKKNRK. Serine 110 carries O-linked (GlcNAc) serine glycosylation. Lysine 118 is covalently cross-linked (Glycyl lysine isopeptide (Lys-Gly) (interchain with G-Cter in ubiquitin)).

It belongs to the histone H2B family. As to quaternary structure, the nucleosome is a histone octamer containing two molecules each of H2A, H2B, H3 and H4 assembled in one H3-H4 heterotetramer and two H2A-H2B heterodimers. The octamer wraps approximately 147 bp of DNA. In terms of processing, monoubiquitination of Lys-118 gives a specific tag for epigenetic transcriptional activation and is also prerequisite for histone H3 'Lys-4' and 'Lys-79' methylation. GlcNAcylation at Ser-110 promotes monoubiquitination of Lys-118. It fluctuates in response to extracellular glucose, and associates with transcribed genes.

It is found in the nucleus. The protein resides in the chromosome. Functionally, core component of nucleosome. Nucleosomes wrap and compact DNA into chromatin, limiting DNA accessibility to the cellular machineries which require DNA as a template. Histones thereby play a central role in transcription regulation, DNA repair, DNA replication and chromosomal stability. DNA accessibility is regulated via a complex set of post-translational modifications of histones, also called histone code, and nucleosome remodeling. The chain is Histone H2B.1/H2B.2 from Tigriopus californicus (Marine copepod).